The following is a 394-amino-acid chain: Elongation factor Tu (394 aa).

In terms of domain architecture, tr-type G spans 10-204 (KPHVNVGTIG…ALDTYIPEPE (195 aa)). The segment at 19 to 26 (GHVDHGKT) is G1. Residue 19–26 (GHVDHGKT) participates in GTP binding. Thr26 lines the Mg(2+) pocket. Positions 60–64 (GITIN) are G2. A G3 region spans residues 81 to 84 (DCPG). GTP-binding positions include 81 to 85 (DCPGH) and 136 to 139 (NKCD). The segment at 136-139 (NKCD) is G4. A G5 region spans residues 174–176 (SAL).

This sequence belongs to the TRAFAC class translation factor GTPase superfamily. Classic translation factor GTPase family. EF-Tu/EF-1A subfamily. As to quaternary structure, monomer.

The protein localises to the cytoplasm. The catalysed reaction is GTP + H2O = GDP + phosphate + H(+). GTP hydrolase that promotes the GTP-dependent binding of aminoacyl-tRNA to the A-site of ribosomes during protein biosynthesis. The protein is Elongation factor Tu of Shewanella denitrificans (strain OS217 / ATCC BAA-1090 / DSM 15013).